The following is an 88-amino-acid chain: Small ribosomal subunit protein bS20 (88 aa).

This sequence belongs to the bacterial ribosomal protein bS20 family.

Functionally, binds directly to 16S ribosomal RNA. This is Small ribosomal subunit protein bS20 from Bartonella tribocorum (strain CIP 105476 / IBS 506).